Reading from the N-terminus, the 246-residue chain is Probable transcriptional regulatory protein WP1214 (246 aa).

The segment at 1–22 (MAGHSQFSNIKHRKGAQDAKRS) is disordered.

This sequence belongs to the TACO1 family.

The protein resides in the cytoplasm. The polypeptide is Probable transcriptional regulatory protein WP1214 (Wolbachia pipientis subsp. Culex pipiens (strain wPip)).